The primary structure comprises 446 residues: MSLINFDSSKLTPFVHENELGEMQAMVNAANTELRNGTGAGSDFRGWLDLPVDYDKDEFARIKKAAKKIQGDSEVLICIGIGGSYLGAQAAIELLNSNFYGKEKTDMPIVVFCGNSLSGSYLYDLIEWLGDKDFSINVISKSGTTTEPSVAFRIFKDKLIKKYGKEEAAKRIYATTDRQKGALKTEADAEGYEEFVVPDDIGGRYSVLTAVGLLPIAAAGADIDALMKGAADARADYTDTDVHKNSPYQYAALRNILYRKGYTTEIVENYEPSLRMFGEWCKQLMGESEGKDNKGIWPSSANFTTDLHSLGQYIQEGLRNLFETVIRVENPRHDVKIPGDEKNLDQLNFLEGKSLNYVNDRAYEGVVLAHTDGGVPVMTVNIPDQTEHTLGYMIYFFELAIAISGYLNGINPFNQPGVEEYKRNMFGLLNKPGYENLHDDLTKRLK.

Catalysis depends on Glu-287, which acts as the Proton donor. Active-site residues include His-308 and Lys-422.

The protein belongs to the GPI family.

The protein localises to the cytoplasm. It carries out the reaction alpha-D-glucose 6-phosphate = beta-D-fructose 6-phosphate. Its pathway is carbohydrate biosynthesis; gluconeogenesis. It functions in the pathway carbohydrate degradation; glycolysis; D-glyceraldehyde 3-phosphate and glycerone phosphate from D-glucose: step 2/4. In terms of biological role, catalyzes the reversible isomerization of glucose-6-phosphate to fructose-6-phosphate. In Lactobacillus helveticus (strain DPC 4571), this protein is Glucose-6-phosphate isomerase.